Consider the following 692-residue polypeptide: Vacuolar amino acid transporter 3 (692 aa).

Residues 1–14 (MNGKEVSSGSGRTQ) are compositionally biased toward polar residues. Residues 1 to 71 (MNGKEVSSGS…TGGLLKKPPL (71 aa)) form a disordered region. Low complexity predominate over residues 15 to 24 (SNNNKKNNNG). A compositionally biased stretch (polar residues) spans 28-38 (GISHASGSPLT). Phosphoserine is present on residues Ser-59, Ser-119, and Ser-121. Disordered stretches follow at residues 135–170 (KWTN…SNRK) and 258–294 (DLSE…GRHP). The segment covering 141 to 153 (PSSPSQYQYPSQP) has biased composition (low complexity). Over residues 154 to 167 (ALSTSIPSQAPSFS) the composition is skewed to polar residues. A Phosphoserine modification is found at Ser-165. Positions 258–279 (DLSEEEEEEEETEEEPEEEALE) are enriched in acidic residues. The next 11 membrane-spanning stretches (helical) occupy residues 302 to 322 (AVLL…PKAF), 329 to 349 (FSAL…VSLI), 374 to 394 (FAIL…YTVF), 412 to 432 (GSIS…PLSL), 443 to 463 (ALIA…YSIY), 483 to 503 (WSLF…LIPI), 519 to 539 (AVMC…YAAF), 561 to 581 (VQLL…FPAI), 607 to 627 (YFRC…ANDL), 630 to 650 (FVSL…PPLL), and 665 to 685 (LLLD…TSWQ).

This sequence belongs to the amino acid/polyamine transporter 2 family.

It localises to the vacuole membrane. Its function is as follows. Involved in amino acid efflux from the vacuole to the cytoplasm. Capable of transporting large neutral amino acids including tyrosine, glutamine, asparagine, isoleucine and leucine. This Saccharomyces cerevisiae (strain ATCC 204508 / S288c) (Baker's yeast) protein is Vacuolar amino acid transporter 3 (AVT3).